A 153-amino-acid polypeptide reads, in one-letter code: NADPH-dependent 7-cyano-7-deazaguanine reductase (153 aa).

Cysteine 51 functions as the Thioimide intermediate in the catalytic mechanism. The Proton donor role is filled by aspartate 58. Residues 73-75 and 92-93 each bind substrate; these read LES and HE.

This sequence belongs to the GTP cyclohydrolase I family. QueF type 1 subfamily.

The protein resides in the cytoplasm. The enzyme catalyses 7-aminomethyl-7-carbaguanine + 2 NADP(+) = 7-cyano-7-deazaguanine + 2 NADPH + 3 H(+). Its pathway is tRNA modification; tRNA-queuosine biosynthesis. Catalyzes the NADPH-dependent reduction of 7-cyano-7-deazaguanine (preQ0) to 7-aminomethyl-7-deazaguanine (preQ1). The chain is NADPH-dependent 7-cyano-7-deazaguanine reductase from Bradyrhizobium diazoefficiens (strain JCM 10833 / BCRC 13528 / IAM 13628 / NBRC 14792 / USDA 110).